The following is a 290-amino-acid chain: Phosphatidylserine decarboxylase proenzyme (290 aa).

Catalysis depends on charge relay system; for autoendoproteolytic cleavage activity residues aspartate 96, histidine 153, and serine 257. Serine 257 (schiff-base intermediate with substrate; via pyruvic acid; for decarboxylase activity) is an active-site residue. Serine 257 carries the pyruvic acid (Ser); by autocatalysis modification.

Belongs to the phosphatidylserine decarboxylase family. PSD-B subfamily. Prokaryotic type I sub-subfamily. As to quaternary structure, heterodimer of a large membrane-associated beta subunit and a small pyruvoyl-containing alpha subunit. It depends on pyruvate as a cofactor. In terms of processing, is synthesized initially as an inactive proenzyme. Formation of the active enzyme involves a self-maturation process in which the active site pyruvoyl group is generated from an internal serine residue via an autocatalytic post-translational modification. Two non-identical subunits are generated from the proenzyme in this reaction, and the pyruvate is formed at the N-terminus of the alpha chain, which is derived from the carboxyl end of the proenzyme. The autoendoproteolytic cleavage occurs by a canonical serine protease mechanism, in which the side chain hydroxyl group of the serine supplies its oxygen atom to form the C-terminus of the beta chain, while the remainder of the serine residue undergoes an oxidative deamination to produce ammonia and the pyruvoyl prosthetic group on the alpha chain. During this reaction, the Ser that is part of the protease active site of the proenzyme becomes the pyruvoyl prosthetic group, which constitutes an essential element of the active site of the mature decarboxylase.

It localises to the cell membrane. It carries out the reaction a 1,2-diacyl-sn-glycero-3-phospho-L-serine + H(+) = a 1,2-diacyl-sn-glycero-3-phosphoethanolamine + CO2. The protein operates within phospholipid metabolism; phosphatidylethanolamine biosynthesis; phosphatidylethanolamine from CDP-diacylglycerol: step 2/2. Catalyzes the formation of phosphatidylethanolamine (PtdEtn) from phosphatidylserine (PtdSer). The chain is Phosphatidylserine decarboxylase proenzyme from Haemophilus influenzae (strain ATCC 51907 / DSM 11121 / KW20 / Rd).